A 576-amino-acid chain; its full sequence is Arginine--tRNA ligase (576 aa).

A 'HIGH' region motif is present at residues 126–136; sequence ANPTGPMHIGH.

The protein belongs to the class-I aminoacyl-tRNA synthetase family. Monomer.

The protein localises to the cytoplasm. The catalysed reaction is tRNA(Arg) + L-arginine + ATP = L-arginyl-tRNA(Arg) + AMP + diphosphate. The protein is Arginine--tRNA ligase (argS) of Rickettsia prowazekii (strain Madrid E).